Consider the following 269-residue polypeptide: Small ribosomal subunit protein uS3 (269 aa).

The KH type-2 domain occupies 38–106 (IREWLHKNLE…QIQLNILEVK (69 aa)). A disordered region spans residues 215–269 (AQKAARQAAQGGRGGRGGNRRGRGDRPDRRGGRRRAEAAKQSAETPAPQTENAGA). Over residues 236–252 (GRGDRPDRRGGRRRAEA) the composition is skewed to basic and acidic residues. A compositionally biased stretch (polar residues) spans 256 to 269 (SAETPAPQTENAGA).

It belongs to the universal ribosomal protein uS3 family. As to quaternary structure, part of the 30S ribosomal subunit. Forms a tight complex with proteins S10 and S14.

Its function is as follows. Binds the lower part of the 30S subunit head. Binds mRNA in the 70S ribosome, positioning it for translation. This is Small ribosomal subunit protein uS3 from Cutibacterium acnes (strain DSM 16379 / KPA171202) (Propionibacterium acnes).